A 1143-amino-acid chain; its full sequence is AP-3 complex subunit delta (1143 aa).

HEAT repeat units follow at residues 129 to 166, 167 to 203, 205 to 242, 245 to 279, 280 to 317, 318 to 354, 356 to 389, and 416 to 455; these read DLARELANDILTLLSTQKTHILKRAITVLYKIFLRYPE, SLRPAFPKLREKLDDPEPSVVSCSVNVICELARRNPK, YLPLAPVLFRILTNTTNNYWMLIKIVKLFAALTPHEPR, KKLIDPLTNIINSSPSVSLLYECIQTCITGMSDHI, PLMKLCISKLRTLIEHNDQNLKYLGLLALNNIMKIHPK, AVSEHRDLVLNCLEDDDISIRLRALDLLPGMTSKKNI, DIVFKLLDHLDNAEGQYKEQIIEKIIELCSMGTY, and LIASQLLDVVIRVKIVRAYSTRQMIELLKNPKLMSNPTEG. 5 disordered regions span residues 520–541, 634–692, 704–728, 741–792, and 829–899; these read KIPSLDDDDEEEEAQEEEDQNE, QEPI…RHPI, KQANNPYMLGGKVSKKLSTNDPENI, HVGA…NDAL, and KKNA…QAAA. A compositionally biased stretch (acidic residues) spans 524–540; the sequence is LDDDDEEEEAQEEEDQN. Residues 526 to 550 are a coiled coil; it reads DDDEEEEAQEEEDQNEITHEIVQEC. The segment covering 653-662 has biased composition (basic residues); the sequence is HQKKHHKHHR. Residues 666–675 show a composition bias toward acidic residues; that stretch reads DGDDDEDDET. A coiled-coil region spans residues 814–835; it reads TDIIKEKEREMAMLAKKNAKLS. Residues 840–849 are compositionally biased toward polar residues; it reads PSTANYSEVT. Low complexity-rich tracts occupy residues 854 to 867 and 881 to 899; these read APAKKATKKAAAGS and KPAATSSTTTTTKSTQAAA. A GAE domain is found at 914-1016; the sequence is KTILDDDNFK…FTLLASPSSS (103 aa).

The protein belongs to the adaptor complexes large subunit family. Adaptor protein complex 3 (AP-3) is a heterotetramer composed of two large adaptins (delta-type subunit and beta-type subunit), a medium adaptin (mu-type subunit) and a small adaptin (sigma-type subunit).

It is found in the endosome membrane. Functionally, part of the AP-3 complex, an adaptor-related complex which is essential for the compartmentalization of the endocytic pathway. The protein is AP-3 complex subunit delta (ap3d1) of Dictyostelium discoideum (Social amoeba).